Reading from the N-terminus, the 106-residue chain is Thioredoxin-like protein YdbP (106 aa).

A Thioredoxin domain is found at 1-106 (MKKITTNEQF…VTEFLSEHIS (106 aa)). Cysteines 29 and 32 form a disulfide.

The protein belongs to the thioredoxin family.

Functionally, participates in various redox reactions through the reversible oxidation of its active center dithiol to a disulfide and catalyzes dithiol-disulfide exchange reactions. The protein is Thioredoxin-like protein YdbP (ydbP) of Bacillus subtilis (strain 168).